The chain runs to 330 residues: Malate dehydrogenase (330 aa).

12–18 provides a ligand contact to NAD(+); sequence GAAGQIG. R93 and R99 together coordinate substrate. NAD(+) is bound by residues N106, Q113, and 130 to 132; that span reads VGN. Residues N132 and R163 each contribute to the substrate site. The active-site Proton acceptor is H188.

It belongs to the LDH/MDH superfamily. MDH type 2 family.

The catalysed reaction is (S)-malate + NAD(+) = oxaloacetate + NADH + H(+). Its function is as follows. Catalyzes the reversible oxidation of malate to oxaloacetate. This chain is Malate dehydrogenase, found in Thermobifida fusca (strain YX).